We begin with the raw amino-acid sequence, 427 residues long: Mitogen-activated protein kinase 8 (427 aa).

A Protein kinase domain is found at 26–321; it reads YQNLKPIGSG…VDEALQHPYI (296 aa). Residues 32–40 and lysine 55 each bind ATP; that span reads IGSGAQGIV. Cysteine 116 carries the S-nitrosocysteine modification. Aspartate 151 serves as the catalytic Proton acceptor. Threonine 183 is subject to Phosphothreonine; by MAP2K7. Positions 183 to 185 match the TXY motif; it reads TPY. The residue at position 185 (tyrosine 185) is a Phosphotyrosine; by MAP2K4. Phosphoserine occurs at positions 301 and 377. The tract at residues 371-427 is disordered; that stretch reads VIRGQPSPLGAAVINGSQHPSSSSSVNDVSSMSTDPTLASDTDSSLEAAAGPLGCCR. Residues 387 to 403 are compositionally biased toward low complexity; sequence SQHPSSSSSVNDVSSMS. Positions 404-415 are enriched in polar residues; the sequence is TDPTLASDTDSS.

Belongs to the protein kinase superfamily. CMGC Ser/Thr protein kinase family. MAP kinase subfamily. As to quaternary structure, forms a complex with MAPK8IP1 and ARHGEF28. Found in a complex with SH3RF1, RAC1, MAP3K11/MLK3, MAP2K7/MKK7 and MAPK8IP1/JIP1. Found in a complex with SH3RF1, RAC2, MAP3K7/TAK1, MAP2K7/MKK7, MAPK8IP1/JIP1 and MAPK9/JNK2. Binds to at least four scaffolding proteins, MAPK8IP1/JIP-1, MAPK8IP2/JIP-2, MAPK8IP3/JIP-3/JSAP1 and SPAG9/MAPK8IP4/JIP-4. These proteins also bind other components of the JNK signaling pathway. Interacts with TP53 and WWOX. Interacts with JAMP. Interacts with HSF1 (via D domain and preferentially with hyperphosphorylated form); this interaction occurs under both normal growth conditions and immediately upon heat shock. Interacts (phosphorylated form) with NFE2; the interaction phosphorylates NFE2 in undifferentiated cells. Interacts with NFATC4. Interacts with MECOM; regulates JNK signaling. Interacts with PIN1; this interaction mediates MAPK8 conformational changes leading to the binding of MAPK8 to its substrates. Interacts with GRIPAP1. Interacts with POU5F1; phosphorylates POU5F1 at 'Ser-355'. Interacts with STMN2, STMN3 and STMN4. Interacts with HSF4. The cofactor is Mg(2+). Dually phosphorylated on Thr-183 and Tyr-185 by MAP2K7 and MAP2K4, which activates the enzyme. Phosphorylated by TAOK2. May be phosphorylated at Thr-183 and Tyr-185 by MAP3K1/MEKK1. Phosphorylated form is more concentrated at synapses than none-phosphorylated.

The protein resides in the cytoplasm. The protein localises to the nucleus. It localises to the synapse. The enzyme catalyses L-seryl-[protein] + ATP = O-phospho-L-seryl-[protein] + ADP + H(+). It catalyses the reaction L-threonyl-[protein] + ATP = O-phospho-L-threonyl-[protein] + ADP + H(+). Its activity is regulated as follows. Activated by threonine and tyrosine phosphorylation by either of two dual specificity kinases, MAP2K4 and MAP2K7. MAP2K4 shows a strong preference for Tyr-185 while MAP2K7 phosphorylates Tyr-183 preferentially. Inhibited by dual specificity phosphatases, such as DUSP1. Inhibited by SERPINB3. Functionally, serine/threonine-protein kinase involved in various processes such as cell proliferation, differentiation, migration, transformation and programmed cell death. Extracellular stimuli such as pro-inflammatory cytokines or physical stress stimulate the stress-activated protein kinase/c-Jun N-terminal kinase (SAP/JNK) signaling pathway. In this cascade, two dual specificity kinases MAP2K4/MKK4 and MAP2K7/MKK7 phosphorylate and activate MAPK8/JNK1. In turn, MAPK8/JNK1 phosphorylates a number of transcription factors, primarily components of AP-1 such as JUN, JDP2 and ATF2 and thus regulates AP-1 transcriptional activity. Phosphorylates the replication licensing factor CDT1, inhibiting the interaction between CDT1 and the histone H4 acetylase HBO1 to replication origins. Loss of this interaction abrogates the acetylation required for replication initiation. Promotes stressed cell apoptosis by phosphorylating key regulatory factors including p53/TP53 and Yes-associates protein YAP1. In T-cells, MAPK8 and MAPK9 are required for polarized differentiation of T-helper cells into Th1 cells. Contributes to the survival of erythroid cells by phosphorylating the antagonist of cell death BAD upon EPO stimulation. Mediates starvation-induced BCL2 phosphorylation, BCL2 dissociation from BECN1, and thus activation of autophagy. Phosphorylates STMN2 and hence regulates microtubule dynamics, controlling neurite elongation in cortical neurons. In the developing brain, through its cytoplasmic activity on STMN2, negatively regulates the rate of exit from multipolar stage and of radial migration from the ventricular zone. Phosphorylates several other substrates including heat shock factor protein 4 (HSF4), the deacetylase SIRT1, ELK1, or the E3 ligase ITCH. Phosphorylates the CLOCK-BMAL1 heterodimer and plays a role in the regulation of the circadian clock. Phosphorylates the heat shock transcription factor HSF1, suppressing HSF1-induced transcriptional activity. Phosphorylates POU5F1, which results in the inhibition of POU5F1's transcriptional activity and enhances its proteasomal degradation. Phosphorylates JUND and this phosphorylation is inhibited in the presence of MEN1. In neurons, phosphorylates SYT4 which captures neuronal dense core vesicles at synapses. Phosphorylates EIF4ENIF1/4-ET in response to oxidative stress, promoting P-body assembly. Phosphorylates SIRT6 in response to oxidative stress, stimulating its mono-ADP-ribosyltransferase activity. Phosphorylates NLRP3, promoting assembly of the NLRP3 inflammasome. Phosphorylates ALKBH5 in response to reactive oxygen species (ROS), promoting ALKBH5 sumoylation and inactivation. In terms of biological role, JNK1 isoforms display different binding patterns: beta-1 preferentially binds to c-Jun, whereas alpha-1, alpha-2, and beta-2 have a similar low level of binding to both c-Jun or ATF2. However, there is no correlation between binding and phosphorylation, which is achieved at about the same efficiency by all isoforms. The polypeptide is Mitogen-activated protein kinase 8 (MAPK8) (Homo sapiens (Human)).